Consider the following 441-residue polypeptide: N-succinylarginine dihydrolase (441 aa).

Residues 19 to 28 (AGLSFGNEAS), asparagine 110, and 137 to 138 (HR) each bind substrate. The active site involves glutamate 174. Arginine 212 lines the substrate pocket. Residue histidine 248 is part of the active site. Aspartate 250 and asparagine 359 together coordinate substrate. The active-site Nucleophile is cysteine 365.

It belongs to the succinylarginine dihydrolase family. As to quaternary structure, homodimer.

It carries out the reaction N(2)-succinyl-L-arginine + 2 H2O + 2 H(+) = N(2)-succinyl-L-ornithine + 2 NH4(+) + CO2. It functions in the pathway amino-acid degradation; L-arginine degradation via AST pathway; L-glutamate and succinate from L-arginine: step 2/5. In terms of biological role, catalyzes the hydrolysis of N(2)-succinylarginine into N(2)-succinylornithine, ammonia and CO(2). The polypeptide is N-succinylarginine dihydrolase (Erwinia tasmaniensis (strain DSM 17950 / CFBP 7177 / CIP 109463 / NCPPB 4357 / Et1/99)).